The primary structure comprises 155 residues: Transcriptional repressor NrdR (155 aa).

A zinc finger lies at 3–34 (CPFCNQTDTKVIDSRLVADGVQVRRRRECQAC). Positions 49–139 (PKVIKQDGTR…VYRSFQDISE (91 aa)) constitute an ATP-cone domain.

This sequence belongs to the NrdR family. The cofactor is Zn(2+).

Its function is as follows. Negatively regulates transcription of bacterial ribonucleotide reductase nrd genes and operons by binding to NrdR-boxes. The polypeptide is Transcriptional repressor NrdR (Teredinibacter turnerae (strain ATCC 39867 / T7901)).